Here is a 301-residue protein sequence, read N- to C-terminus: GTPase Era (301 aa).

Residues 7-175 (YCGFIAIVGR…AGIVRKHLPE (169 aa)) enclose the Era-type G domain. Residues 15-22 (GRPNVGKS) form a G1 region. GTP is bound at residue 15–22 (GRPNVGKS). A G2 region spans residues 41-45 (QTTRH). Positions 62 to 65 (DTPG) are G3. Residues 62–66 (DTPGL) and 124–127 (NKVD) each bind GTP. Residues 124–127 (NKVD) form a G4 region. The segment at 154 to 156 (ISA) is G5. The KH type-2 domain occupies 206 to 283 (LGAELPYSVT…HLELWVKVKS (78 aa)).

Belongs to the TRAFAC class TrmE-Era-EngA-EngB-Septin-like GTPase superfamily. Era GTPase family. As to quaternary structure, monomer.

It is found in the cytoplasm. Its subcellular location is the cell inner membrane. Functionally, an essential GTPase that binds both GDP and GTP, with rapid nucleotide exchange. Plays a role in 16S rRNA processing and 30S ribosomal subunit biogenesis and possibly also in cell cycle regulation and energy metabolism. This is GTPase Era from Salmonella paratyphi B (strain ATCC BAA-1250 / SPB7).